A 301-amino-acid polypeptide reads, in one-letter code: ATP synthase gamma chain (301 aa).

Belongs to the ATPase gamma chain family. In terms of assembly, F-type ATPases have 2 components, CF(1) - the catalytic core - and CF(0) - the membrane proton channel. CF(1) has five subunits: alpha(3), beta(3), gamma(1), delta(1), epsilon(1). CF(0) has three main subunits: a, b and c.

The protein localises to the cell inner membrane. Its function is as follows. Produces ATP from ADP in the presence of a proton gradient across the membrane. The gamma chain is believed to be important in regulating ATPase activity and the flow of protons through the CF(0) complex. The chain is ATP synthase gamma chain from Helicobacter pylori (strain ATCC 700392 / 26695) (Campylobacter pylori).